A 248-amino-acid polypeptide reads, in one-letter code: Stress-related protein (248 aa).

It belongs to the REF/SRPP family.

This chain is Stress-related protein (SRP), found in Vitis riparia (Frost grape).